A 196-amino-acid chain; its full sequence is Probable malonic semialdehyde reductase RutE (196 aa).

Belongs to the nitroreductase family. HadB/RutE subfamily. FMN is required as a cofactor.

The catalysed reaction is 3-hydroxypropanoate + NADP(+) = 3-oxopropanoate + NADPH + H(+). Its function is as follows. May reduce toxic product malonic semialdehyde to 3-hydroxypropionic acid, which is excreted. In Escherichia coli O7:K1 (strain IAI39 / ExPEC), this protein is Probable malonic semialdehyde reductase RutE.